Here is a 452-residue protein sequence, read N- to C-terminus: THO complex subunit 5A (452 aa).

Belongs to the THOC5 family. Component of the THO complex, which is composed of THO1, THO2, THO3, THO5, THO6 and THO7.

It localises to the nucleus. Functionally, acts as a component of the THO subcomplex of the TREX complex which is thought to couple mRNA transcription, processing and nuclear export. The protein is THO complex subunit 5A (THO5A) of Arabidopsis thaliana (Mouse-ear cress).